We begin with the raw amino-acid sequence, 338 residues long: Glycerol-3-phosphate dehydrogenase [NAD(P)+] (338 aa).

NADPH is bound by residues S13, W14, and K108. Positions 108, 139, and 141 each coordinate sn-glycerol 3-phosphate. A143 lines the NADPH pocket. K194, D247, S257, R258, and N259 together coordinate sn-glycerol 3-phosphate. K194 serves as the catalytic Proton acceptor. R258 is an NADPH binding site. Positions 282 and 284 each coordinate NADPH.

The protein belongs to the NAD-dependent glycerol-3-phosphate dehydrogenase family.

The protein resides in the cytoplasm. It carries out the reaction sn-glycerol 3-phosphate + NAD(+) = dihydroxyacetone phosphate + NADH + H(+). The enzyme catalyses sn-glycerol 3-phosphate + NADP(+) = dihydroxyacetone phosphate + NADPH + H(+). It participates in membrane lipid metabolism; glycerophospholipid metabolism. Catalyzes the reduction of the glycolytic intermediate dihydroxyacetone phosphate (DHAP) to sn-glycerol 3-phosphate (G3P), the key precursor for phospholipid synthesis. This chain is Glycerol-3-phosphate dehydrogenase [NAD(P)+], found in Streptococcus pyogenes serotype M28 (strain MGAS6180).